The chain runs to 301 residues: Putative hydro-lyase C5H10.01 (301 aa).

It belongs to the D-glutamate cyclase family.

In Schizosaccharomyces pombe (strain 972 / ATCC 24843) (Fission yeast), this protein is Putative hydro-lyase C5H10.01.